We begin with the raw amino-acid sequence, 211 residues long: Redox-sensing transcriptional repressor Rex (211 aa).

Positions 18 to 57 form a DNA-binding region, H-T-H motif; that stretch reads LYYRFIESLHAAGKQRVSSTELSQAVKVDSATIRRDFSYF. Position 92 to 97 (92 to 97) interacts with NAD(+); the sequence is GVGNLG.

The protein belongs to the transcriptional regulatory Rex family. As to quaternary structure, homodimer.

The protein localises to the cytoplasm. Modulates transcription in response to changes in cellular NADH/NAD(+) redox state. In Shouchella clausii (strain KSM-K16) (Alkalihalobacillus clausii), this protein is Redox-sensing transcriptional repressor Rex.